The primary structure comprises 490 residues: Glutamate--tRNA ligase (490 aa).

The 'HIGH' region signature appears at 15-25 (PSPTGYLHVGG). A 'KMSKS' region motif is present at residues 259 to 263 (KLSKR). Lys262 contributes to the ATP binding site.

This sequence belongs to the class-I aminoacyl-tRNA synthetase family. Glutamate--tRNA ligase type 1 subfamily. As to quaternary structure, monomer.

It is found in the cytoplasm. The catalysed reaction is tRNA(Glu) + L-glutamate + ATP = L-glutamyl-tRNA(Glu) + AMP + diphosphate. Its function is as follows. Catalyzes the attachment of glutamate to tRNA(Glu) in a two-step reaction: glutamate is first activated by ATP to form Glu-AMP and then transferred to the acceptor end of tRNA(Glu). The protein is Glutamate--tRNA ligase of Bdellovibrio bacteriovorus (strain ATCC 15356 / DSM 50701 / NCIMB 9529 / HD100).